The chain runs to 98 residues: Ribonuclease kappa (98 aa).

2 helical membrane passes run 13–33 and 65–85; these read ACGI…GIFF and VSYN…FSFC.

The protein belongs to the RNase K family. Interacts with the proton translocation complex V0 of the V-ATPase. Interacts with ATP6AP1.

The protein resides in the endomembrane system. Its subcellular location is the cytoplasmic vesicle. It localises to the clathrin-coated vesicle membrane. Functionally, endoribonuclease which preferentially cleaves ApU and ApG phosphodiester bonds. Hydrolyzes UpU bonds at a lower rate. Regulates the activity of vacuolar (H+)-ATPase (V-ATPase) which is responsible for acidifying and maintaining the pH of intracellular compartments. Required at an early stage of receptor-mediated endocytosis. In Mus musculus (Mouse), this protein is Ribonuclease kappa (Rnasek).